The primary structure comprises 361 residues: Protein C42 (361 aa).

Residues 32-36 (LLCDE) are LXCXE motif. Residues 357-360 (KRKK) carry the Nuclear localization signal motif.

Belongs to the baculoviridae C42 protein family. Forms a complex with proteins E27 and p78/83. The interaction with p78/83 mediates nuclear translocation of P78/83. Interacts with protein Ac102. Interacts with IE0.

The protein resides in the host nucleus. Its subcellular location is the virion. Functionally, plays a role in host nuclear actin polymerization by recruiting p78/73 protein that is capable of activating an actin-related protein 2/3 complex to initiate nuclear actin polymerization. The protein is Protein C42 of Lepidoptera (butterflies and moths).